The chain runs to 130 residues: Small ribosomal subunit protein uS8 (130 aa).

The protein belongs to the universal ribosomal protein uS8 family. In terms of assembly, part of the 30S ribosomal subunit. Contacts proteins S5 and S12.

Its function is as follows. One of the primary rRNA binding proteins, it binds directly to 16S rRNA central domain where it helps coordinate assembly of the platform of the 30S subunit. This Erwinia tasmaniensis (strain DSM 17950 / CFBP 7177 / CIP 109463 / NCPPB 4357 / Et1/99) protein is Small ribosomal subunit protein uS8.